Reading from the N-terminus, the 553-residue chain is Copine-9 (553 aa).

2 consecutive C2 domains span residues 1-125 (MSLS…ERPL) and 132-255 (KCGT…FTVY). Ca(2+)-binding residues include Asp-163, Asp-169, Asp-225, Asp-227, and Asp-233. Residues 299-500 (NFTVAIDFTA…VQFVPFRDYV (202 aa)) form the VWFA domain. Residues 531-553 (TRDIQPRPPPPVSPNPTPAPEQP) form a disordered region. The segment covering 536-553 (PRPPPPVSPNPTPAPEQP) has biased composition (pro residues).

The protein belongs to the copine family. Requires Ca(2+) as cofactor.

In terms of biological role, probable calcium-dependent phospholipid-binding protein that may play a role in calcium-mediated intracellular processes. Plays a role in dendrite formation by melanocytes. In Mus musculus (Mouse), this protein is Copine-9.